A 363-amino-acid chain; its full sequence is Beta-1,3-N-acetylglucosaminyltransferase lunatic fringe (363 aa).

At 1–8 (MLKSCGRK) the chain is on the cytoplasmic side. The helical; Signal-anchor for type II membrane protein transmembrane segment at 9 to 29 (LLLSLVGSMFTCLLVLMVEPP) threads the bilayer. Over 30–363 (GRPGLARGEA…TPWCPSNVVY (334 aa)) the chain is Lumenal. Residue arginine 113 coordinates substrate. Residue asparagine 151 is glycosylated (N-linked (GlcNAc...) asparagine). Cystine bridges form between cysteine 152–cysteine 163 and cysteine 181–cysteine 244. Residue aspartate 185 coordinates substrate. Aspartate 186 lines the Mn(2+) pocket. The active site involves aspartate 274. Histidine 298 serves as a coordination point for Mn(2+). Cysteine 348 and cysteine 357 form a disulfide bridge.

This sequence belongs to the glycosyltransferase 31 family. Mn(2+) serves as cofactor. Co(2+) is required as a cofactor. In terms of processing, a soluble form may be derived from the membrane form by proteolytic processing.

The protein resides in the golgi apparatus membrane. The enzyme catalyses 3-O-(alpha-L-fucosyl)-L-threonyl-[EGF-like domain protein] + UDP-N-acetyl-alpha-D-glucosamine = 3-O-(N-acetyl-beta-D-glucosaminyl-(1-&gt;3)-alpha-L-fucosyl)-L-threonyl-[EGF-like domain protein] + UDP + H(+). It carries out the reaction 3-O-(alpha-L-fucosyl)-L-seryl-[EGF-like domain protein] + UDP-N-acetyl-alpha-D-glucosamine = 3-O-(N-acetyl-beta-D-glucosaminyl-(1-&gt;3)-alpha-L-fucosyl)-L-seryl-[EGF-like domain protein] + UDP + H(+). In terms of biological role, glycosyltransferase that initiates the elongation of O-linked fucose residues attached to EGF-like repeats in the extracellular domain of Notch molecules. Essential mediator of somite segmentation and patterning. This is Beta-1,3-N-acetylglucosaminyltransferase lunatic fringe (LFNG) from Gallus gallus (Chicken).